The following is a 333-amino-acid chain: tRNA N6-adenosine threonylcarbamoyltransferase (333 aa).

Fe cation contacts are provided by histidine 111 and histidine 115. Residues valine 134–glycine 138, aspartate 167, glycine 180, aspartate 184, and asparagine 269 contribute to the substrate site. Aspartate 297 lines the Fe cation pocket.

The protein belongs to the KAE1 / TsaD family. Fe(2+) is required as a cofactor.

The protein localises to the cytoplasm. The catalysed reaction is L-threonylcarbamoyladenylate + adenosine(37) in tRNA = N(6)-L-threonylcarbamoyladenosine(37) in tRNA + AMP + H(+). Its function is as follows. Required for the formation of a threonylcarbamoyl group on adenosine at position 37 (t(6)A37) in tRNAs that read codons beginning with adenine. Is involved in the transfer of the threonylcarbamoyl moiety of threonylcarbamoyl-AMP (TC-AMP) to the N6 group of A37, together with TsaE and TsaB. TsaD likely plays a direct catalytic role in this reaction. The sequence is that of tRNA N6-adenosine threonylcarbamoyltransferase from Carboxydothermus hydrogenoformans (strain ATCC BAA-161 / DSM 6008 / Z-2901).